We begin with the raw amino-acid sequence, 360 residues long: Glycerol-1-phosphate dehydrogenase [NAD(P)+] (360 aa).

Residues G108–D112 and T130–S133 contribute to the NAD(+) site. D135 serves as a coordination point for substrate. S139 is an NAD(+) binding site. Residue D182 coordinates substrate. Residues D182 and H262 each coordinate Zn(2+). H266 contacts substrate. H278 is a Zn(2+) binding site.

Belongs to the glycerol-1-phosphate dehydrogenase family. It depends on Zn(2+) as a cofactor.

Its subcellular location is the cytoplasm. It carries out the reaction sn-glycerol 1-phosphate + NAD(+) = dihydroxyacetone phosphate + NADH + H(+). The enzyme catalyses sn-glycerol 1-phosphate + NADP(+) = dihydroxyacetone phosphate + NADPH + H(+). It functions in the pathway membrane lipid metabolism; glycerophospholipid metabolism. Catalyzes the NAD(P)H-dependent reduction of dihydroxyacetonephosphate (DHAP or glycerone phosphate) to glycerol 1-phosphate (G1P). The G1P thus generated is used as the glycerophosphate backbone of phospholipids in the cellular membranes of Archaea. The sequence is that of Glycerol-1-phosphate dehydrogenase [NAD(P)+] from Methanoculleus marisnigri (strain ATCC 35101 / DSM 1498 / JR1).